A 421-amino-acid chain; its full sequence is Cyclin-A2 (421 aa).

Residue M1 is modified to N-acetylmethionine. The segment at M1–R60 is disordered. Residue S5 is modified to Phosphoserine.

Belongs to the cyclin family. Cyclin AB subfamily. In terms of assembly, interacts with the CDK1 and CDK2 protein kinases to form serine/threonine kinase holoenzyme complexes. Interacts with CDK1 (hyperphosphorylated form in G1 and underphosphorylated forms in S and G2). Interacts with CDK2; the interaction increases from G1 to G2. Interacts (associated with CDK2 but not with CDK1) with SCAPER; regulates the activity of CCNA2/CDK2 by transiently maintaining CCNA2 in the cytoplasm. Forms a ternary complex with CDK2 and CDKN1B; CDKN1B inhibits the kinase activity of CDK2 through conformational rearrangements. Interacts with INCA1. Polyubiquitinated via 'Lys-11'-linked ubiquitin by the anaphase-promoting complex (APC/C), leading to its degradation by the proteasome. Deubiquitinated and stabilized by USP37 enables entry into S phase. Ubiquitinated during the G1 phase by the SCF(FBXO31) complex, leading to its proteasomal degradation.

It is found in the nucleus. The protein resides in the cytoplasm. In terms of biological role, cyclin which controls both the G1/S and the G2/M transition phases of the cell cycle. Functions through the formation of specific serine/threonine kinase holoenzyme complexes with the cyclin-dependent protein kinases CDK1 and CDK2. The cyclin subunit confers the substrate specificity of these complexes and differentially interacts with and activates CDK1 and CDK2 throughout the cell cycle. In Mesocricetus auratus (Golden hamster), this protein is Cyclin-A2.